Consider the following 75-residue polypeptide: Small ribosomal subunit protein bS18 (75 aa).

The protein belongs to the bacterial ribosomal protein bS18 family. Part of the 30S ribosomal subunit. Forms a tight heterodimer with protein bS6.

Functionally, binds as a heterodimer with protein bS6 to the central domain of the 16S rRNA, where it helps stabilize the platform of the 30S subunit. The protein is Small ribosomal subunit protein bS18 of Legionella pneumophila (strain Paris).